A 339-amino-acid polypeptide reads, in one-letter code: GTPase Obg (339 aa).

The 159-residue stretch at 1 to 159 (MKFLDQAKVY…RALWLRLKLI (159 aa)) folds into the Obg domain. An OBG-type G domain is found at 160 to 327 (ADGGIIGLPN…VLRSVAHVIE (168 aa)). GTP is bound by residues 166-173 (GLPNAGKS), 191-195 (FTTLY), 212-215 (DIPG), 279-282 (SQVD), and 308-310 (SAV). Mg(2+) contacts are provided by serine 173 and threonine 193.

Belongs to the TRAFAC class OBG-HflX-like GTPase superfamily. OBG GTPase family. Monomer. Mg(2+) serves as cofactor.

It localises to the cytoplasm. An essential GTPase which binds GTP, GDP and possibly (p)ppGpp with moderate affinity, with high nucleotide exchange rates and a fairly low GTP hydrolysis rate. Plays a role in control of the cell cycle, stress response, ribosome biogenesis and in those bacteria that undergo differentiation, in morphogenesis control. This is GTPase Obg from Bartonella bacilliformis (strain ATCC 35685 / KC583 / Herrer 020/F12,63).